Consider the following 370-residue polypeptide: Chorismate synthase (370 aa).

Arginine 47 provides a ligand contact to NADP(+). FMN-binding positions include 124–126 (RSS), glycine 286, 301–305 (KPTAT), and arginine 327.

This sequence belongs to the chorismate synthase family. In terms of assembly, homotetramer. The cofactor is FMNH2.

It carries out the reaction 5-O-(1-carboxyvinyl)-3-phosphoshikimate = chorismate + phosphate. Its pathway is metabolic intermediate biosynthesis; chorismate biosynthesis; chorismate from D-erythrose 4-phosphate and phosphoenolpyruvate: step 7/7. Its function is as follows. Catalyzes the anti-1,4-elimination of the C-3 phosphate and the C-6 proR hydrogen from 5-enolpyruvylshikimate-3-phosphate (EPSP) to yield chorismate, which is the branch point compound that serves as the starting substrate for the three terminal pathways of aromatic amino acid biosynthesis. This reaction introduces a second double bond into the aromatic ring system. This is Chorismate synthase from Trichodesmium erythraeum (strain IMS101).